A 132-amino-acid polypeptide reads, in one-letter code: MQSFHVLQLIAVGFGGALGAMARFIVSNQVYAWWGRDFAWGTLVVNSLGSFAIGLIMILMIDKFHASVEMRSFLIVGFLGAFTTFSTFSFETYSFLQTGEITKAMLNIGVSVLTGLFAVWLGIWTGKQFFSP.

The next 4 membrane-spanning stretches (helical) occupy residues 6-26 (VLQLIAVGFGGALGAMARFIV), 41-61 (GTLVVNSLGSFAIGLIMILMI), 73-93 (FLIVGFLGAFTTFSTFSFETY), and 104-124 (AMLNIGVSVLTGLFAVWLGIW). Residues glycine 80 and threonine 83 each coordinate Na(+).

It belongs to the fluoride channel Fluc/FEX (TC 1.A.43) family.

It is found in the cell inner membrane. It catalyses the reaction fluoride(in) = fluoride(out). With respect to regulation, na(+) is not transported, but it plays an essential structural role and its presence is essential for fluoride channel function. Functionally, fluoride-specific ion channel. Important for reducing fluoride concentration in the cell, thus reducing its toxicity. This chain is Fluoride-specific ion channel FluC, found in Hydrogenovibrio crunogenus (strain DSM 25203 / XCL-2) (Thiomicrospira crunogena).